We begin with the raw amino-acid sequence, 360 residues long: DNA replication and repair protein RecF (360 aa).

33–40 contributes to the ATP binding site; sequence GENGSGKT.

Belongs to the RecF family.

It localises to the cytoplasm. Functionally, the RecF protein is involved in DNA metabolism; it is required for DNA replication and normal SOS inducibility. RecF binds preferentially to single-stranded, linear DNA. It also seems to bind ATP. This is DNA replication and repair protein RecF from Rickettsia africae (strain ESF-5).